Reading from the N-terminus, the 448-residue chain is uncharacterized protein (448 aa).

Residues 187–198 are compositionally biased toward basic and acidic residues; sequence SKGDRGDADDRG. 3 disordered regions span residues 187–221, 243–270, and 291–361; these read SKGD…LPTR, LQVP…GATM, and LSGL…LPNG. Low complexity predominate over residues 243 to 261; that stretch reads LQVPGGTSAAIPSASSTPS. Basic and acidic residues predominate over residues 307–334; it reads FDERGQEVRDPADYEHANEPDERRADDR.

This sequence to M.tuberculosis Rv0025 and Rv0739.

This is an uncharacterized protein from Mycobacterium tuberculosis (strain CDC 1551 / Oshkosh).